The primary structure comprises 515 residues: Leucine-rich repeat transmembrane neuronal protein 2 (515 aa).

The N-terminal stretch at 1-33 is a signal peptide; sequence MGLHFKWPLGAPMLAAIYAMSVVLKMLPALGMA. The region spanning 34 to 61 is the LRRNT domain; sequence CPPKCRCEKLLFYCDSQGFHSVPNATDK. Residues 34 to 421 are Extracellular-facing; the sequence is CPPKCRCEKL…EPDNAIFTQR (388 aa). A glycan (N-linked (GlcNAc...) asparagine) is linked at Asn57. 10 LRR repeats span residues 63–83, 86–107, 110–131, 134–155, 158–179, 182–203, 206–227, 230–251, 254–275, and 278–299; these read SLGL…QFAS, QLTW…AFQG, KLKE…TFTQ, NLQN…LFYG, KLQT…LFWD, SLEF…GFAG, KLRE…HFLR, SLHT…MDWT, TLEK…VFET, and NLKI…ILNS. A glycan (N-linked (GlcNAc...) asparagine) is linked at Asn126. Asn243 carries N-linked (GlcNAc...) asparagine glycosylation. In terms of domain architecture, LRRCT spans 311–362; that stretch reads NLWECSPRVCALASWLGSFQGRWEHSILCHSPDHTQGEDILDAVHGFQLCWN. An N-linked (GlcNAc...) asparagine glycan is attached at Asn362. A helical transmembrane segment spans residues 422–442; that stretch reads VITGTMALLFSFFFIIFIVFI. Residues 443-515 lie on the Cytoplasmic side of the membrane; sequence SRKCCPPTLR…QQLPYKECEV (73 aa). Residues 512–515 carry the Involved in DLG4-binding motif; that stretch reads ECEV.

This sequence belongs to the LRRTM family. As to quaternary structure, interacts with DLG4. Interacts with neurexin NRXN1; interaction is mediated by heparan sulfate glycan modification on neurexin. In terms of tissue distribution, expressed in neuronal tissues.

The protein localises to the cell membrane. The protein resides in the postsynaptic cell membrane. Functionally, involved in the development and maintenance of excitatory synapses in the vertebrate nervous system. Regulates surface expression of AMPA receptors and instructs the development of functional glutamate release sites. Acts as a ligand for the presynaptic receptors NRXN1-A and NRXN1-B. This chain is Leucine-rich repeat transmembrane neuronal protein 2 (Lrrtm2), found in Mus musculus (Mouse).